The sequence spans 196 residues: Thymidine kinase (196 aa).

ATP-binding positions include 9–16 and 87–90; these read SAMNAGKS and DECQ. Glu-88 acts as the Proton acceptor in catalysis. Zn(2+) is bound by residues Cys-145, Cys-147, Cys-182, and His-185.

This sequence belongs to the thymidine kinase family. Homotetramer.

It is found in the cytoplasm. It carries out the reaction thymidine + ATP = dTMP + ADP + H(+). This chain is Thymidine kinase, found in Yersinia pestis.